Reading from the N-terminus, the 430-residue chain is Trigger factor (430 aa).

The PPIase FKBP-type domain maps to 163-248 (GDIAVIDFEG…LNSLKRKNMP (86 aa)).

Belongs to the FKBP-type PPIase family. Tig subfamily.

The protein localises to the cytoplasm. The catalysed reaction is [protein]-peptidylproline (omega=180) = [protein]-peptidylproline (omega=0). Involved in protein export. Acts as a chaperone by maintaining the newly synthesized protein in an open conformation. Functions as a peptidyl-prolyl cis-trans isomerase. The polypeptide is Trigger factor (Brevibacillus brevis (strain 47 / JCM 6285 / NBRC 100599)).